The sequence spans 291 residues: Elongation factor Ts (291 aa).

Residues 79 to 82 form an involved in Mg(2+) ion dislocation from EF-Tu region; that stretch reads TDFV.

It belongs to the EF-Ts family.

It localises to the cytoplasm. Functionally, associates with the EF-Tu.GDP complex and induces the exchange of GDP to GTP. It remains bound to the aminoacyl-tRNA.EF-Tu.GTP complex up to the GTP hydrolysis stage on the ribosome. The polypeptide is Elongation factor Ts (Leuconostoc mesenteroides subsp. mesenteroides (strain ATCC 8293 / DSM 20343 / BCRC 11652 / CCM 1803 / JCM 6124 / NCDO 523 / NBRC 100496 / NCIMB 8023 / NCTC 12954 / NRRL B-1118 / 37Y)).